A 180-amino-acid polypeptide reads, in one-letter code: Photosystem II extrinsic protein V (180 aa).

The N-terminal stretch at 1 to 40 (MFSKAFSFQKVFAPARRRLLVLLLAALMAGFGWGLAPVFA) is a signal peptide. Heme c-binding residues include C73, C76, H77, and H128.

The protein belongs to the cytochrome c family. PsbV subfamily. In terms of assembly, PSII is composed of 1 copy each of membrane proteins PsbA, PsbB, PsbC, PsbD, PsbE, PsbF, PsbH, PsbI, PsbJ, PsbK, PsbL, PsbM, PsbT, PsbX, PsbY, PsbZ, Psb30/Ycf12, peripheral proteins PsbO, CyanoQ (PsbQ), PsbU, PsbV and a large number of cofactors. It forms dimeric complexes. Heme c is required as a cofactor.

The protein resides in the cellular thylakoid membrane. In terms of biological role, one of the extrinsic, lumenal subunits of photosystem II (PSII). PSII is a light-driven water plastoquinone oxidoreductase, using light energy to abstract electrons from H(2)O, generating a proton gradient subsequently used for ATP formation. The extrinsic proteins stabilize the structure of photosystem II oxygen-evolving complex (OEC), the ion environment of oxygen evolution and protect the OEC against heat-induced inactivation. Low-potential cytochrome c that plays a role in the OEC of PSII. The polypeptide is Photosystem II extrinsic protein V (Synechococcus sp. (strain JA-2-3B'a(2-13)) (Cyanobacteria bacterium Yellowstone B-Prime)).